The following is a 1209-amino-acid chain: Zinc finger protein 804A (1209 aa).

The segment at 57-81 (FYCELCDKQYYKHQEFDNHINSYDH) adopts a C2H2-type zinc-finger fold. Basic and acidic residues predominate over residues 380–394 (VKHNEASTTEVENKN). 2 disordered regions span residues 380–401 (VKHN…TLAP) and 792–860 (PEEF…MKPQ). Positions 807–819 (KPKKKRRRKRGRF) are enriched in basic residues. Composition is skewed to basic and acidic residues over residues 826–836 (LELKENTDYPV) and 848–860 (LISE…MKPQ).

The chain is Zinc finger protein 804A (ZNF804A) from Homo sapiens (Human).